The chain runs to 302 residues: 4-diphosphocytidyl-2-C-methyl-D-erythritol kinase (302 aa).

The active site involves Lys-11. Pro-93–Thr-103 contacts ATP. The active site involves Asp-135.

The protein belongs to the GHMP kinase family. IspE subfamily.

The catalysed reaction is 4-CDP-2-C-methyl-D-erythritol + ATP = 4-CDP-2-C-methyl-D-erythritol 2-phosphate + ADP + H(+). It participates in isoprenoid biosynthesis; isopentenyl diphosphate biosynthesis via DXP pathway; isopentenyl diphosphate from 1-deoxy-D-xylulose 5-phosphate: step 3/6. Functionally, catalyzes the phosphorylation of the position 2 hydroxy group of 4-diphosphocytidyl-2C-methyl-D-erythritol. The chain is 4-diphosphocytidyl-2-C-methyl-D-erythritol kinase from Gloeobacter violaceus (strain ATCC 29082 / PCC 7421).